A 122-amino-acid polypeptide reads, in one-letter code: Methylglyoxal synthase (122 aa).

An MGS-like domain is found at 1 to 122 (MRIALIAHDK…DLFIKHLKGK (122 aa)). Residues H8, K12, 34–37 (TGTT), and 54–55 (SG) each bind substrate. D60 functions as the Proton donor/acceptor in the catalytic mechanism. H87 is a binding site for substrate.

The protein belongs to the methylglyoxal synthase family.

It catalyses the reaction dihydroxyacetone phosphate = methylglyoxal + phosphate. Its function is as follows. Catalyzes the formation of methylglyoxal from dihydroxyacetone phosphate. This Acholeplasma laidlawii (strain PG-8A) protein is Methylglyoxal synthase.